The sequence spans 513 residues: Ferulic acid decarboxylase 1 (513 aa).

Asn-174, His-197, and Glu-240 together coordinate Mn(2+). Residues 174–179 (NWSIAR), 196–197 (QH), and Glu-240 each bind prenylated FMN. Glu-289 acts as the Proton donor in catalysis. Lys-405 lines the prenylated FMN pocket.

It belongs to the UbiD family. UbiD-like/FDC subfamily. Homodimer. May form higher order oligomers. Mn(2+) serves as cofactor. It depends on prenylated FMN as a cofactor.

Its subcellular location is the cytoplasm. The enzyme catalyses (E)-4-coumarate + H(+) = 4-vinylphenol + CO2. It catalyses the reaction (E)-cinnamate + H(+) = styrene + CO2. It carries out the reaction (E)-ferulate + H(+) = 2-methoxy-4-vinylphenol + CO2. Functionally, catalyzes the reversible decarboxylation of aromatic carboxylic acids like ferulic acid, p-coumaric acid or cinnamic acid, producing the corresponding vinyl derivatives 4-vinylphenol, 4-vinylguaiacol, and styrene, respectively, which play the role of aroma metabolites. In Candida dubliniensis (strain CD36 / ATCC MYA-646 / CBS 7987 / NCPF 3949 / NRRL Y-17841) (Yeast), this protein is Ferulic acid decarboxylase 1.